The primary structure comprises 818 residues: Auxin response factor 12 (818 aa).

A compositionally biased stretch (low complexity) spans 1–10 (MSSSSAASIG). Residues 1–24 (MSSSSAASIGPPQPPPPPAPPEEE) are disordered. A compositionally biased stretch (pro residues) spans 11–20 (PPQPPPPPAP). A DNA-binding region (TF-B3) is located at residues 135–237 (FCKTLTASDT…QLLLGIRRAS (103 aa)). Disordered stretches follow at residues 526-565 (NDQKQKIQPDQSYQVPTSAVLPSPTSLPSHLREKFGFSDP) and 629-648 (GSVLHNSPTSKDGSVENKIG). Positions 629–640 (GSVLHNSPTSKD) are enriched in polar residues. The region spanning 719-803 (RTFVKVYKSG…WYIKILSPED (85 aa)) is the PB1 domain.

The protein belongs to the ARF family. As to quaternary structure, homodimers and heterodimers. In terms of tissue distribution, expressed in roots, culms, leaves and young panicles.

Its subcellular location is the nucleus. Its function is as follows. Auxin response factors (ARFs) are transcriptional factors that bind specifically to the DNA sequence 5'-TGTCTC-3' found in the auxin-responsive promoter elements (AuxREs). The sequence is that of Auxin response factor 12 (ARF12) from Oryza sativa subsp. japonica (Rice).